A 620-amino-acid polypeptide reads, in one-letter code: Translation initiation factor IF-2 (620 aa).

A tr-type G domain is found at lysine 126–lysine 295. The G1 stretch occupies residues glycine 135 to threonine 142. Glycine 135–threonine 142 provides a ligand contact to GTP. Residues asparagine 160 to serine 164 are G2. Residues aspartate 181–glycine 184 form a G3 region. Residues aspartate 181–histidine 185 and asparagine 235–aspartate 238 each bind GTP. The tract at residues asparagine 235–aspartate 238 is G4. The interval serine 271–leucine 273 is G5.

This sequence belongs to the TRAFAC class translation factor GTPase superfamily. Classic translation factor GTPase family. IF-2 subfamily.

It is found in the cytoplasm. In terms of biological role, one of the essential components for the initiation of protein synthesis. Protects formylmethionyl-tRNA from spontaneous hydrolysis and promotes its binding to the 30S ribosomal subunits. Also involved in the hydrolysis of GTP during the formation of the 70S ribosomal complex. This is Translation initiation factor IF-2 from Malacoplasma penetrans (strain HF-2) (Mycoplasma penetrans).